The primary structure comprises 253 residues: 5'/3'-nucleotidase SurE (253 aa).

A divalent metal cation-binding residues include D8, D9, S39, and N92.

The protein belongs to the SurE nucleotidase family. The cofactor is a divalent metal cation.

The protein localises to the cytoplasm. The enzyme catalyses a ribonucleoside 5'-phosphate + H2O = a ribonucleoside + phosphate. The catalysed reaction is a ribonucleoside 3'-phosphate + H2O = a ribonucleoside + phosphate. It catalyses the reaction [phosphate](n) + H2O = [phosphate](n-1) + phosphate + H(+). Functionally, nucleotidase with a broad substrate specificity as it can dephosphorylate various ribo- and deoxyribonucleoside 5'-monophosphates and ribonucleoside 3'-monophosphates with highest affinity to 3'-AMP. Also hydrolyzes polyphosphate (exopolyphosphatase activity) with the preference for short-chain-length substrates (P20-25). Might be involved in the regulation of dNTP and NTP pools, and in the turnover of 3'-mononucleotides produced by numerous intracellular RNases (T1, T2, and F) during the degradation of various RNAs. The polypeptide is 5'/3'-nucleotidase SurE (Escherichia coli O127:H6 (strain E2348/69 / EPEC)).